A 686-amino-acid polypeptide reads, in one-letter code: Osmo-dependent choline transporter BetT2 (686 aa).

Residues 1–22 (MATDNPRAVDDQETHPKDRLNR) are Cytoplasmic-facing. A helical transmembrane segment spans residues 23–43 (VVFYVSALIILIFSLTTILFN). Topologically, residues 44–60 (DFANRALNQVLDWVSST) are periplasmic. The helical transmembrane segment at 61 to 81 (FSWYYLLAATLYMVFVIFIAC) threads the bilayer. Residues 82 to 100 (SRYGNIKLGPKHSKPEFSL) lie on the Cytoplasmic side of the membrane. Residues 101-121 (LSWSAMLFSAGIGIDLMFFSV) form a helical membrane-spanning segment. Topologically, residues 122 to 150 (AEPLSHYMHPPVGEGQTYEAARQGMVWTL) are periplasmic. The chain crosses the membrane as a helical span at residues 151 to 171 (FHYGLTGWCMYALIGMALGYF). Residues 172 to 203 (SYRYNLPLTIRSALYPIFGKKINGPIGHSVDT) are Cytoplasmic-facing. Residues 204–224 (AAVIGTIFGIATTCGIGVVQL) traverse the membrane as a helical segment. Residues 225–237 (NYGLHVLFDLPEN) are Periplasmic-facing. Residues 238 to 258 (LWVQTALILVAVIITIISVTS) traverse the membrane as a helical segment. The Cytoplasmic portion of the chain corresponds to 259-265 (GVNKGLR). Residues 266 to 286 (ILSEVNIYVSVGLMLFILFLG) form a helical membrane-spanning segment. Topologically, residues 287–325 (NTEFLLNALVQNVGDYLSRFPSLALESFAFDQPKEWMNS) are periplasmic. Residues 326–346 (WTLFFWAWWVAWSPFVGLFLA) form a helical membrane-spanning segment. Topologically, residues 347 to 356 (RISRGRTIRE) are cytoplasmic. Residues 357–377 (FVSGTLIIPLLFTLTWLSIFG) traverse the membrane as a helical segment. Topologically, residues 378-412 (NSALHNVIFDGNIALAETVLSNPAHGFYDLLAQYP) are periplasmic. A helical transmembrane segment spans residues 413 to 433 (WFPFIAGVATITGLLFYVTSA). Over 434-459 (DSGALVLGNFTTQFTNIDHDAPRWLS) the chain is Cytoplasmic. A helical transmembrane segment spans residues 460-480 (VFWAVAIGLLTLAMLMTNGIT). Over 481 to 484 (ALQN) the chain is Periplasmic. Residues 485–505 (ATIIMGLPFSFVMFLVMAGLY) form a helical membrane-spanning segment. Over 506-686 (KSLRLEDYRQ…NRPLFPDPKA (181 aa)) the chain is Cytoplasmic.

It belongs to the BCCT transporter (TC 2.A.15) family.

It localises to the cell inner membrane. Functionally, uptake of choline in the presence of high salinity. May primarily serve for osmoprotection. The polypeptide is Osmo-dependent choline transporter BetT2 (Acinetobacter baylyi (strain ATCC 33305 / BD413 / ADP1)).